Consider the following 440-residue polypeptide: Xaa-Pro dipeptidase (440 aa).

Residues Asp244, Asp255, His335, Glu380, and Glu419 each coordinate Mn(2+).

The protein belongs to the peptidase M24B family. Bacterial-type prolidase subfamily. Mn(2+) is required as a cofactor.

The catalysed reaction is Xaa-L-Pro dipeptide + H2O = an L-alpha-amino acid + L-proline. Its function is as follows. Splits dipeptides with a prolyl residue in the C-terminal position. This is Xaa-Pro dipeptidase from Shewanella putrefaciens (strain CN-32 / ATCC BAA-453).